A 327-amino-acid polypeptide reads, in one-letter code: RING-H2 finger protein ATL34 (327 aa).

The signal sequence occupies residues 1–26; it reads MTIGKSPILLHHHVIFLLLLVLQVSG. The chain crosses the membrane as a helical span at residues 47 to 67; sequence AVIIAMLMFTLLFSMLACCVC. An RING-type; atypical zinc finger spans residues 128–170; the sequence is CAICLNEFEDEETLRLMPPCSHAFHASCIDVWLSSRSTCPVCR. The disordered stretch occupies residues 280 to 327; the sequence is LSHMKTLPQARSSREGYRSGSVGSERRGKGKEKEFGEGSFDRLKAEMV. Positions 303-327 are enriched in basic and acidic residues; the sequence is SERRGKGKEKEFGEGSFDRLKAEMV.

Belongs to the RING-type zinc finger family. ATL subfamily.

The protein resides in the membrane. It carries out the reaction S-ubiquitinyl-[E2 ubiquitin-conjugating enzyme]-L-cysteine + [acceptor protein]-L-lysine = [E2 ubiquitin-conjugating enzyme]-L-cysteine + N(6)-ubiquitinyl-[acceptor protein]-L-lysine.. Its pathway is protein modification; protein ubiquitination. This chain is RING-H2 finger protein ATL34 (ATL34), found in Arabidopsis thaliana (Mouse-ear cress).